The primary structure comprises 28 residues: Peptide 2 (28 aa).

This sequence belongs to the short scorpion toxin superfamily. Potassium channel inhibitor family. Alpha-KTx 09 subfamily. Expressed by the venom gland.

It localises to the secreted. Its function is as follows. Blocks potassium channels. In Hottentotta tamulus sindicus (Scorpion), this protein is Peptide 2.